The chain runs to 232 residues: Orotidine 5'-phosphate decarboxylase (232 aa).

Residues Asp10, Lys32, 59–68 (DLKFHDIPNT), Thr119, Arg180, Gln189, Gly209, and Arg210 each bind substrate. Residue Lys61 is the Proton donor of the active site.

This sequence belongs to the OMP decarboxylase family. Type 1 subfamily. Homodimer.

The catalysed reaction is orotidine 5'-phosphate + H(+) = UMP + CO2. The protein operates within pyrimidine metabolism; UMP biosynthesis via de novo pathway; UMP from orotate: step 2/2. Catalyzes the decarboxylation of orotidine 5'-monophosphate (OMP) to uridine 5'-monophosphate (UMP). The protein is Orotidine 5'-phosphate decarboxylase of Actinobacillus succinogenes (strain ATCC 55618 / DSM 22257 / CCUG 43843 / 130Z).